A 158-amino-acid polypeptide reads, in one-letter code: 6,7-dimethyl-8-ribityllumazine synthase (158 aa).

5-amino-6-(D-ribitylamino)uracil contacts are provided by residues tryptophan 28, 59–61 (TVE), and 81–83 (VVV). 86-87 (DT) provides a ligand contact to (2S)-2-hydroxy-3-oxobutyl phosphate. The active-site Proton donor is the histidine 89. 5-amino-6-(D-ribitylamino)uracil is bound at residue phenylalanine 114. Arginine 128 is a (2S)-2-hydroxy-3-oxobutyl phosphate binding site.

Belongs to the DMRL synthase family.

It catalyses the reaction (2S)-2-hydroxy-3-oxobutyl phosphate + 5-amino-6-(D-ribitylamino)uracil = 6,7-dimethyl-8-(1-D-ribityl)lumazine + phosphate + 2 H2O + H(+). It participates in cofactor biosynthesis; riboflavin biosynthesis; riboflavin from 2-hydroxy-3-oxobutyl phosphate and 5-amino-6-(D-ribitylamino)uracil: step 1/2. Functionally, catalyzes the formation of 6,7-dimethyl-8-ribityllumazine by condensation of 5-amino-6-(D-ribitylamino)uracil with 3,4-dihydroxy-2-butanone 4-phosphate. This is the penultimate step in the biosynthesis of riboflavin. The chain is 6,7-dimethyl-8-ribityllumazine synthase from Micrococcus luteus (strain ATCC 4698 / DSM 20030 / JCM 1464 / CCM 169 / CCUG 5858 / IAM 1056 / NBRC 3333 / NCIMB 9278 / NCTC 2665 / VKM Ac-2230) (Micrococcus lysodeikticus).